An 842-amino-acid polypeptide reads, in one-letter code: Alanine--tRNA ligase (842 aa).

Zn(2+) is bound by residues His-549, His-553, Cys-650, and His-654.

It belongs to the class-II aminoacyl-tRNA synthetase family. Zn(2+) serves as cofactor.

Its subcellular location is the cytoplasm. It catalyses the reaction tRNA(Ala) + L-alanine + ATP = L-alanyl-tRNA(Ala) + AMP + diphosphate. Functionally, catalyzes the attachment of alanine to tRNA(Ala) in a two-step reaction: alanine is first activated by ATP to form Ala-AMP and then transferred to the acceptor end of tRNA(Ala). Also edits incorrectly charged Ser-tRNA(Ala) and Gly-tRNA(Ala) via its editing domain. In Campylobacter jejuni subsp. jejuni serotype O:23/36 (strain 81-176), this protein is Alanine--tRNA ligase.